We begin with the raw amino-acid sequence, 236 residues long: Large ribosomal subunit protein uL3 (236 aa).

Disordered stretches follow at residues 132–153 and 200–236; these read SNRA…GMAQ and KGGD…KKGG. A compositionally biased stretch (polar residues) spans 133-145; the sequence is NRASHGNSRSHNV. Q153 is modified (N5-methylglutamine). Positions 206 to 216 are enriched in polar residues; it reads VSPSIRSARPT. The span at 217–228 shows a compositional bias: low complexity; that stretch reads NNGNVNAAAKGG.

This sequence belongs to the universal ribosomal protein uL3 family. In terms of assembly, part of the 50S ribosomal subunit. Forms a cluster with proteins L14 and L19. In terms of processing, methylated by PrmB.

Its function is as follows. One of the primary rRNA binding proteins, it binds directly near the 3'-end of the 23S rRNA, where it nucleates assembly of the 50S subunit. The protein is Large ribosomal subunit protein uL3 of Nitrosospira multiformis (strain ATCC 25196 / NCIMB 11849 / C 71).